The sequence spans 470 residues: Desmin (470 aa).

The head stretch occupies residues 2–108; that stretch reads SQAYSSSQRV…QEFLTTRTNE (107 aa). Residue serine 7 is modified to Phosphoserine; by CDK1. A Phosphoserine; by AURKB modification is found at serine 12. Position 16 is an omega-N-methylarginine (arginine 16). The residue at position 17 (threonine 17) is a Phosphothreonine; by AURKB and ROCK1. Position 28 is a phosphoserine; by CDK1 (serine 28). Phosphoserine is present on serine 31. Serine 32 is modified (phosphoserine; by CDK1). Arginine 37 is subject to Asymmetric dimethylarginine; alternate. Arginine 37 bears the Omega-N-methylarginine; alternate mark. At serine 45 the chain carries Phosphoserine. Residue arginine 58 is modified to ADP-ribosylarginine. Residue serine 60 is modified to Phosphoserine; by AURKB. Serine 68 bears the Phosphoserine mark. Omega-N-methylarginine is present on arginine 70. Phosphothreonine; by ROCK1 occurs at positions 76 and 77. Serine 81 bears the Phosphoserine mark. Residues 108–416 form the IF rod domain; the sequence is EKVELQELND…KLLEGEESRI (309 aa). Positions 109–141 are coil 1A; sequence KVELQELNDRFANYIEKVRFLEQQNAALAAEVN. A linker 1 region spans residues 142 to 151; that stretch reads RLKGREPTRV. The coil 1B stretch occupies residues 152–252; sequence AELYEEELRE…HEEEIRELQA (101 aa). The tract at residues 253 to 268 is linker 12; the sequence is QLQEQQVQVEMDMSKP. The segment at 268-415 is interaction with NEB; that stretch reads PDLTAALRDI…RKLLEGEESR (148 aa). The tract at residues 269-287 is coil 2A; the sequence is DLTAALRDIRAQYETIAAK. The linker 2 stretch occupies residues 288-295; sequence NISEAEEW. 4 positions are modified to phosphoserine: serine 290, serine 358, serine 361, and serine 424. The coil 2B stretch occupies residues 296 to 412; the sequence is YKSKVSDLTQ…ATYRKLLEGE (117 aa). The interval 413–470 is tail; that stretch reads ESRINLPIQTYSALNFRETSPEQRGSEVHTKKTVMIKTIETRDGEVVSEATQQQHEVL. Residues 438–453 form an interaction with CRYAB region; sequence SEVHTKKTVMIKTIET.

The protein belongs to the intermediate filament family. Homomer. Interacts with DST. Interacts with MTM1. Interacts with EPPK1; interaction is dependent of higher-order structure of intermediate filament. Interacts with CRYAB. Interacts with NEB (via nebulin repeats 160-164). Interacts (via rod region) with NEBL (via nebulin repeats 1-5). Interacts with ASB2 isoform 1; the interaction targets DES for proteasomal degradation. Interacts with PLEC isoform 1C. Interacts with PKP1. Interacts with FLII. ADP-ribosylation prevents ability to form intermediate filaments. In terms of processing, phosphorylation at Ser-7, Ser-28 and Ser-32 by CDK1, phosphorylation at Ser-60 by AURKB and phosphorylation at Thr-76 by ROCK1 contribute to efficient separation of desmin intermediate filaments during mitosis. Post-translationally, ubiquitination by a SCF-like complex containing ASB2 isoform 1 leads to proteasomal degradation.

It localises to the cytoplasm. Its subcellular location is the myofibril. The protein resides in the sarcomere. The protein localises to the z line. It is found in the cell membrane. It localises to the sarcolemma. Its subcellular location is the nucleus. The protein resides in the cell tip. The protein localises to the nucleus envelope. Its function is as follows. Muscle-specific type III intermediate filament essential for proper muscular structure and function. Plays a crucial role in maintaining the structure of sarcomeres, inter-connecting the Z-disks and forming the myofibrils, linking them not only to the sarcolemmal cytoskeleton, but also to the nucleus and mitochondria, thus providing strength for the muscle fiber during activity. In adult striated muscle they form a fibrous network connecting myofibrils to each other and to the plasma membrane from the periphery of the Z-line structures. May act as a sarcomeric microtubule-anchoring protein: specifically associates with detyrosinated tubulin-alpha chains, leading to buckled microtubules and mechanical resistance to contraction. Required for nuclear membrane integrity, via anchoring at the cell tip and nuclear envelope, resulting in maintenance of microtubule-derived intracellular mechanical forces. Contributes to the transcriptional regulation of the NKX2-5 gene in cardiac progenitor cells during a short period of cardiomyogenesis and in cardiac side population stem cells in the adult. Plays a role in maintaining an optimal conformation of nebulette (NEB) on heart muscle sarcomeres to bind and recruit cardiac alpha-actin. The polypeptide is Desmin (DES) (Homo sapiens (Human)).